A 359-amino-acid chain; its full sequence is MTGSKTALIMAGGTGGHIFPGLAVAEALRARGWRVHWLGAPASMEARIAAQHGFALESVTFSGVRGKGLATLALLPLRLLRAFWQARAVLRRVQPDVLVGLGGYISFPGALMGLLRRKPLVLHEQNAVAGLANRLLAGRADRVFAAFPGAFGSAAPKARWVGNPLRAAFTQQAGPAERFAARTGPLQLLVMGGSLGARALNELVPQALALLPAAQRPQVLHQSGATQIEALRAHYAAAGVQAELRPFIDDVACALAAADVIVCRAGASTVSEIAAVGAAALFVPLPSAVDDHQTRNARWLVDAGGGWLLPQHELSPRGLAQMLSNLERPALLDKALKAHAMQKTSATQELVGACEELAA.

Residues 14–16 (TGG), asparagine 126, arginine 166, serine 194, isoleucine 248, and glutamine 293 each bind UDP-N-acetyl-alpha-D-glucosamine.

Belongs to the glycosyltransferase 28 family. MurG subfamily.

The protein resides in the cell inner membrane. The enzyme catalyses di-trans,octa-cis-undecaprenyl diphospho-N-acetyl-alpha-D-muramoyl-L-alanyl-D-glutamyl-meso-2,6-diaminopimeloyl-D-alanyl-D-alanine + UDP-N-acetyl-alpha-D-glucosamine = di-trans,octa-cis-undecaprenyl diphospho-[N-acetyl-alpha-D-glucosaminyl-(1-&gt;4)]-N-acetyl-alpha-D-muramoyl-L-alanyl-D-glutamyl-meso-2,6-diaminopimeloyl-D-alanyl-D-alanine + UDP + H(+). The protein operates within cell wall biogenesis; peptidoglycan biosynthesis. In terms of biological role, cell wall formation. Catalyzes the transfer of a GlcNAc subunit on undecaprenyl-pyrophosphoryl-MurNAc-pentapeptide (lipid intermediate I) to form undecaprenyl-pyrophosphoryl-MurNAc-(pentapeptide)GlcNAc (lipid intermediate II). The polypeptide is UDP-N-acetylglucosamine--N-acetylmuramyl-(pentapeptide) pyrophosphoryl-undecaprenol N-acetylglucosamine transferase (Verminephrobacter eiseniae (strain EF01-2)).